We begin with the raw amino-acid sequence, 385 residues long: Zinc finger protein B385R (385 aa).

The C2H2-type zinc finger occupies 166–190 (LQCPNCGCIQELMGTIFDETHFYNH).

Belongs to the asfivirus B385R family.

In Ornithodoros (relapsing fever ticks), this protein is Zinc finger protein B385R.